The sequence spans 955 residues: Glycine dehydrogenase (decarboxylating) (955 aa).

K702 carries the N6-(pyridoxal phosphate)lysine modification.

This sequence belongs to the GcvP family. As to quaternary structure, the glycine cleavage system is composed of four proteins: P, T, L and H. The cofactor is pyridoxal 5'-phosphate.

The enzyme catalyses N(6)-[(R)-lipoyl]-L-lysyl-[glycine-cleavage complex H protein] + glycine + H(+) = N(6)-[(R)-S(8)-aminomethyldihydrolipoyl]-L-lysyl-[glycine-cleavage complex H protein] + CO2. In terms of biological role, the glycine cleavage system catalyzes the degradation of glycine. The P protein binds the alpha-amino group of glycine through its pyridoxal phosphate cofactor; CO(2) is released and the remaining methylamine moiety is then transferred to the lipoamide cofactor of the H protein. The protein is Glycine dehydrogenase (decarboxylating) of Stenotrophomonas maltophilia (strain R551-3).